The sequence spans 382 residues: Galactokinase (382 aa).

34-37 (EHTD) contacts substrate. 124-130 (GAGLSSS) is an ATP binding site. Mg(2+) contacts are provided by Ser-130 and Glu-162. The active-site Proton acceptor is the Asp-174. Residue Tyr-223 coordinates substrate.

This sequence belongs to the GHMP kinase family. GalK subfamily.

It is found in the cytoplasm. It catalyses the reaction alpha-D-galactose + ATP = alpha-D-galactose 1-phosphate + ADP + H(+). Its pathway is carbohydrate metabolism; galactose metabolism. Functionally, catalyzes the transfer of the gamma-phosphate of ATP to D-galactose to form alpha-D-galactose-1-phosphate (Gal-1-P). This chain is Galactokinase, found in Cronobacter sakazakii (strain ATCC BAA-894) (Enterobacter sakazakii).